The chain runs to 1027 residues: Xyloglucanase (1027 aa).

Positions 1–32 (MKTFLGKKLWMASLAVALAAGSFAALPEMTSA) are cleaved as a signal peptide. Residue D70 is the Nucleophile of the active site. 4 BNR repeats span residues 134–143 (RSTDRGDTWQ), 185–196 (WRSSDYGATWSK), 252–262 (YRSTDGGATWT), and 357–367 (FRSKDGGTTWT). The active-site Proton donor is D479. 2 BNR repeats span residues 537 to 545 (SSDGGTNWY) and 717 to 727 (FRSDDGGASWV). The CBM3 domain occupies 876 to 1027 (PEGSIRIEMY…SGTLQWGIEP (152 aa)).

This sequence belongs to the glycosyl hydrolase 74 family.

Its function is as follows. Hydrolyzes the glucosidic bonds of unbranched Glc residues in tamarind seed xyloglucan, producing XXXG, XLXG, XXLG and XLLG. May have a dual endo- and exo- mode of action towards xyloglucan, or may have an endo-processive mode of action. The sequence is that of Xyloglucanase from Paenibacillus sp.